Here is a 404-residue protein sequence, read N- to C-terminus: F-box protein At2g17036 (404 aa).

The F-box domain occupies 2-50 (MDWATLPKDLLDLISKCLESSFDLIQFRSVCSSWRSAAGPKRLLWAHNL).

In Arabidopsis thaliana (Mouse-ear cress), this protein is F-box protein At2g17036.